The primary structure comprises 358 residues: NADH-quinone oxidoreductase subunit H (358 aa).

The next 8 membrane-spanning stretches (helical) occupy residues 20–40 (ITVG…IPLI), 95–115 (ALFY…WAVI), 128–148 (IGLL…IIAG), 168–188 (ISYE…SGSM), 206–226 (VFSW…ISAV), 253–273 (GFAF…IAAL), 295–315 (TPSA…YLWI), and 334–354 (VLIP…ISPL).

Belongs to the complex I subunit 1 family. NDH-1 is composed of 14 different subunits. Subunits NuoA, H, J, K, L, M, N constitute the membrane sector of the complex.

It localises to the cell inner membrane. The enzyme catalyses a quinone + NADH + 5 H(+)(in) = a quinol + NAD(+) + 4 H(+)(out). NDH-1 shuttles electrons from NADH, via FMN and iron-sulfur (Fe-S) centers, to quinones in the respiratory chain. The immediate electron acceptor for the enzyme in this species is believed to be ubiquinone. Couples the redox reaction to proton translocation (for every two electrons transferred, four hydrogen ions are translocated across the cytoplasmic membrane), and thus conserves the redox energy in a proton gradient. This subunit may bind ubiquinone. This chain is NADH-quinone oxidoreductase subunit H, found in Neisseria gonorrhoeae (strain ATCC 700825 / FA 1090).